The primary structure comprises 118 residues: MHRCVGGVCVSLIVCAFLTETLGMVIAAKEKRGWTLNSAGYLLGPHAIDSHRSLSDKHGLAGKREMPLDEDFKTGALRIADEDVVHTIIDFLSYLKLKEIGALDSLPSSLTSEEISQP.

A signal peptide spans 1–19 (MHRCVGGVCVSLIVCAFLT). A propeptide spanning residues 20-30 (ETLGMVIAAKE) is cleaved from the precursor. Residue Ala-61 is modified to Alanine amide.

The protein belongs to the galanin family. Strongly expressed in brain and stomach, moderately in the eye, and very weakly in heart, kidney and gills. Not detected in liver.

Its subcellular location is the secreted. In terms of biological role, endocrine hormone of the central and peripheral nervous systems that binds and activates the G protein-coupled receptors GALR1 (galr1a and galr1b) and GALR2 (galr2a and galr2b). This small neuropeptide may regulate diverse physiologic functions including contraction of smooth muscle of the gastrointestinal and genitourinary tract, growth hormone and insulin release and adrenal secretion. The protein is Galanin peptides of Danio rerio (Zebrafish).